The following is a 363-amino-acid chain: Ferrochelatase (363 aa).

Fe cation-binding residues include histidine 209 and glutamate 290.

It belongs to the ferrochelatase family.

Its subcellular location is the cytoplasm. It catalyses the reaction heme b + 2 H(+) = protoporphyrin IX + Fe(2+). It participates in porphyrin-containing compound metabolism; protoheme biosynthesis; protoheme from protoporphyrin-IX: step 1/1. Functionally, catalyzes the ferrous insertion into protoporphyrin IX. The chain is Ferrochelatase from Methylibium petroleiphilum (strain ATCC BAA-1232 / LMG 22953 / PM1).